The following is an 846-amino-acid chain: Neurofilament medium polypeptide (846 aa).

Residues 1–10 show a composition bias toward polar residues; it reads MSYTLDSLGN. A disordered region spans residues 1-52; the sequence is MSYTLDSLGNPSAYRRVPTETRSSFSRVSGSPSSGFRSQSWSRGSPSTVSSS. S2 is subject to N-acetylserine. Residues 2–104 form a head region; the sequence is SYTLDSLGNP…LSRSNEKEQL (103 aa). Residues 22 to 45 are compositionally biased toward low complexity; that stretch reads RSSFSRVSGSPSSGFRSQSWSRGS. S31 is subject to Phosphoserine. Position 43 is an omega-N-methylarginine (R43). A glycan (O-linked (GlcNAc) threonine) is linked at T48. At S98 the chain carries Phosphoserine. The IF rod domain occupies 100–411; the sequence is EKEQLQGLND…KLLEGEETRF (312 aa). The tract at residues 104–135 is coil 1A; the sequence is LQGLNDRFAGYIEKVHYLEQQNKEIEAEIHAL. Positions 136–148 are linker 1; sequence RQKQASHAQLGDA. A coil 1B region spans residues 149-247; sequence YDQEIRELRA…EEEVADLLAQ (99 aa). A Phosphoserine modification is found at S225. The linker 12 stretch occupies residues 248 to 264; that stretch reads IQASHITVERKDYLKTD. Positions 265 to 286 are coil 2A; the sequence is ISTALKEIRSQLECHSDQNMHQ. Positions 287-290 are linker 2; the sequence is AEEW. The segment at 291 to 411 is coil 2B; that stretch reads FKCRYAKLTE…KLLEGEETRF (121 aa). Y319 is subject to Phosphotyrosine. Residues S345, S417, and S429 each carry the phosphoserine modification. The segment at 412–845 is tail; the sequence is STFSGSITGP…HAIVKEVTQG (434 aa). T431 carries O-linked (GlcNAc) threonine glycosylation. Phosphoserine is present on residues S467 and S483. The disordered stretch occupies residues 483–783; sequence SAKEEKEEAE…GEDRSDDKVV (301 aa). Over residues 489–499 the composition is skewed to acidic residues; that stretch reads EEAEEKEEEPE. Residues 500-510 show a composition bias toward basic and acidic residues; it reads VEKSPVKSPEA. Residues S503 and S507 each carry the phosphoserine modification. Positions 511 to 533 are enriched in acidic residues; it reads KEEEEGEKEEEEEGQEEEEEEDE. Basic and acidic residues predominate over residues 534 to 553; the sequence is GVKSDQAEEGGSEKEGSSEK. Residues S537, S545, S550, and S551 each carry the phosphoserine modification. A compositionally biased stretch (acidic residues) spans 554 to 575; the sequence is DEGEQEEEGETEAEGEGEEAEA. A Phosphothreonine modification is found at T564. The span at 576–603 shows a compositional bias: basic and acidic residues; it reads KEEKKTEGKVEEMAIKEEIKVEKPEKAK. Phosphoserine is present on residues S604, S609, S643, S667, S687, S713, S721, S751, and S767. 2 stretches are compositionally biased toward basic and acidic residues: residues 610–675 and 687–709; these read PVEE…KAVE and SLEKDTKEEKPQQQEKVKEKAEE. Composition is skewed to basic and acidic residues over residues 718-730 and 746-758; these read GDKSPQESKKEDI and TQEKGSGQEEEKG. The span at 769 to 783 shows a compositional bias: basic and acidic residues; it reads AEEKKGEDRSDDKVV.

Belongs to the intermediate filament family. In terms of assembly, forms heterodimers with NEFL; which can further hetero-oligomerize (in vitro). Forms heterodimers with INA (in vitro). In terms of processing, there are a number of repeats of the tripeptide K-S-P, NFM is phosphorylated on a number of the serines in this motif. It is thought that phosphorylation of NFM results in the formation of interfilament cross bridges that are important in the maintenance of axonal caliber. Phosphorylation seems to play a major role in the functioning of the larger neurofilament polypeptides (NF-M and NF-H), the levels of phosphorylation being altered developmentally and coincidentally with a change in the neurofilament function. Post-translationally, phosphorylated in the head and rod regions by the PKC kinase PKN1, leading to the inhibition of polymerization. As to expression, expressed in the dorsal root ganglion neurons (at protein level).

It localises to the cytoplasm. The protein resides in the cytoskeleton. It is found in the cell projection. The protein localises to the axon. Neurofilaments usually contain three intermediate filament proteins: NEFL, NEFM, and NEFH which are involved in the maintenance of neuronal caliber. May additionally cooperate with the neuronal intermediate filament proteins PRPH and INA to form neuronal filamentous networks. This Rattus norvegicus (Rat) protein is Neurofilament medium polypeptide (Nefm).